A 350-amino-acid chain; its full sequence is 4-hydroxy-3-methylbut-2-en-1-yl diphosphate synthase (flavodoxin) (350 aa).

[4Fe-4S] cluster-binding residues include Cys263, Cys266, Cys298, and Glu305.

The protein belongs to the IspG family. The cofactor is [4Fe-4S] cluster.

It carries out the reaction (2E)-4-hydroxy-3-methylbut-2-enyl diphosphate + oxidized [flavodoxin] + H2O + 2 H(+) = 2-C-methyl-D-erythritol 2,4-cyclic diphosphate + reduced [flavodoxin]. It participates in isoprenoid biosynthesis; isopentenyl diphosphate biosynthesis via DXP pathway; isopentenyl diphosphate from 1-deoxy-D-xylulose 5-phosphate: step 5/6. In terms of biological role, converts 2C-methyl-D-erythritol 2,4-cyclodiphosphate (ME-2,4cPP) into 1-hydroxy-2-methyl-2-(E)-butenyl 4-diphosphate. The polypeptide is 4-hydroxy-3-methylbut-2-en-1-yl diphosphate synthase (flavodoxin) (Nautilia profundicola (strain ATCC BAA-1463 / DSM 18972 / AmH)).